Reading from the N-terminus, the 260-residue chain is 5-oxoprolinase subunit A (260 aa).

The protein belongs to the LamB/PxpA family. Forms a complex composed of PxpA, PxpB and PxpC.

It catalyses the reaction 5-oxo-L-proline + ATP + 2 H2O = L-glutamate + ADP + phosphate + H(+). Catalyzes the cleavage of 5-oxoproline to form L-glutamate coupled to the hydrolysis of ATP to ADP and inorganic phosphate. The polypeptide is 5-oxoprolinase subunit A (Methylococcus capsulatus (strain ATCC 33009 / NCIMB 11132 / Bath)).